A 384-amino-acid chain; its full sequence is Flap endonuclease 1 (384 aa).

The N-domain stretch occupies residues 1–108 (MGIHKLMDLL…GELARRQKAK (108 aa)). Aspartate 34 is a Mg(2+) binding site. Arginine 74 serves as a coordination point for DNA. The Mg(2+) site is built by aspartate 90, glutamate 162, glutamate 164, aspartate 183, and aspartate 185. The segment at 126-254 (EALKQEQRNL…VNAFKLITEH (129 aa)) is I-domain. A DNA-binding site is contributed by glutamate 162. Glycine 232 and aspartate 234 together coordinate DNA. Aspartate 234 provides a ligand contact to Mg(2+). The disordered stretch occupies residues 340–384 (AKEHKGSQTRLNDFFKVQPKDTSSTSKASKKPTNTKSANKKGGKK). An interaction with PCNA region spans residues 346 to 354 (SQTRLNDFF). A compositionally biased stretch (low complexity) spans 359-376 (KDTSSTSKASKKPTNTKS).

The protein belongs to the XPG/RAD2 endonuclease family. FEN1 subfamily. Interacts with PCNA. Three molecules of FEN1 bind to one PCNA trimer with each molecule binding to one PCNA monomer. PCNA stimulates the nuclease activity without altering cleavage specificity. Mg(2+) is required as a cofactor. Phosphorylated. Phosphorylation upon DNA damage induces relocalization to the nuclear plasma.

It is found in the nucleus. The protein localises to the nucleolus. Its subcellular location is the nucleoplasm. It localises to the mitochondrion. Structure-specific nuclease with 5'-flap endonuclease and 5'-3' exonuclease activities involved in DNA replication and repair. During DNA replication, cleaves the 5'-overhanging flap structure that is generated by displacement synthesis when DNA polymerase encounters the 5'-end of a downstream Okazaki fragment. It enters the flap from the 5'-end and then tracks to cleave the flap base, leaving a nick for ligation. Also involved in the long patch base excision repair (LP-BER) pathway, by cleaving within the apurinic/apyrimidinic (AP) site-terminated flap. Acts as a genome stabilization factor that prevents flaps from equilibrating into structures that lead to duplications and deletions. Also possesses 5'-3' exonuclease activity on nicked or gapped double-stranded DNA, and exhibits RNase H activity. Also involved in replication and repair of rDNA and in repairing mitochondrial DNA. This is Flap endonuclease 1 from Tetrahymena thermophila (strain SB210).